The primary structure comprises 387 residues: Succinate--CoA ligase [ADP-forming] subunit beta (387 aa).

Residues 9 to 236 (KELFAKHNVP…RAATDPLELK (228 aa)) form the ATP-grasp domain. ATP-binding positions include Lys-45, 52–54 (GRG), Ser-94, and Glu-99. Asn-191 and Asp-205 together coordinate Mg(2+). Residues Asn-256 and 318–320 (GIT) each bind substrate.

This sequence belongs to the succinate/malate CoA ligase beta subunit family. In terms of assembly, heterotetramer of two alpha and two beta subunits. Mg(2+) is required as a cofactor.

It catalyses the reaction succinate + ATP + CoA = succinyl-CoA + ADP + phosphate. It carries out the reaction GTP + succinate + CoA = succinyl-CoA + GDP + phosphate. The protein operates within carbohydrate metabolism; tricarboxylic acid cycle; succinate from succinyl-CoA (ligase route): step 1/1. In terms of biological role, succinyl-CoA synthetase functions in the citric acid cycle (TCA), coupling the hydrolysis of succinyl-CoA to the synthesis of either ATP or GTP and thus represents the only step of substrate-level phosphorylation in the TCA. The beta subunit provides nucleotide specificity of the enzyme and binds the substrate succinate, while the binding sites for coenzyme A and phosphate are found in the alpha subunit. This Mycobacterium bovis (strain ATCC BAA-935 / AF2122/97) protein is Succinate--CoA ligase [ADP-forming] subunit beta.